Consider the following 335-residue polypeptide: MALLGRAFFAGVSRLPCDPGPQRFFSFGTKTLYQSKDAPQSKFFQPVLKPMLPPDAFQGKVAFITGGGTGLGKAMTTFLSTLGAQCVIASRNIDVLKATAEEISSKTGNKVHAIRCDVRDPDMVHNTVLELIKVAGHPDVVINNAAGNFISPSERLTPNGWKTITDIVLNGTAYVTLEIGKQLIKAQKGAAFLAITTIYAESGSGFVMPSSSAKSGVEAMNKSLAAEWGRYGMRFNIIQPGPIKTKGAFSRLDPTGRFEKEMIDRIPCGRLGTMEELANLATFLCSDYASWINGAVIRFDGGEEVFLSGEFNSLKKVTKEEWDIIEGLIRKTKGS.

The transit peptide at 1–34 (MALLGRAFFAGVSRLPCDPGPQRFFSFGTKTLYQ) directs the protein to the mitochondrion. An N6-acetyllysine; alternate mark is found at Lys-42 and Lys-49. N6-succinyllysine; alternate is present on residues Lys-42 and Lys-49. NADP(+) is bound at residue 66-71 (GGGTGL). Thr-69 carries the post-translational modification Phosphothreonine. Lys-73 is subject to N6-succinyllysine. Arg-91 is a binding site for NADP(+). A substrate-binding site is contributed by Arg-91. Residues Lys-97 and Lys-106 each carry the N6-acetyllysine; alternate modification. N6-succinyllysine; alternate is present on residues Lys-97 and Lys-106. Asp-117 is an NADP(+) binding site. Residues Arg-119 and Phe-149 each contribute to the substrate site. The active-site Proton acceptor is the Tyr-199. NADP(+) contacts are provided by residues Lys-214 and 240 to 243 (PGPI). Position 244 is an N6-acetyllysine; alternate (Lys-244). Lys-244 is modified (N6-succinyllysine; alternate). Arg-251 is a binding site for substrate. An N6-acetyllysine; alternate modification is found at Lys-260. Lys-260 is subject to N6-succinyllysine; alternate. Lys-315 bears the N6-acetyllysine mark. Lys-319 is subject to N6-acetyllysine; alternate. Lys-319 is subject to N6-succinyllysine; alternate.

The protein belongs to the short-chain dehydrogenases/reductases (SDR) family. 2,4-dienoyl-CoA reductase subfamily. As to quaternary structure, homotetramer.

The protein localises to the mitochondrion. The enzyme catalyses a (2E,4E)-dienoyl-CoA + NADPH + H(+) = a 4,5-saturated-(3E)-enoyl-CoA + NADP(+). It catalyses the reaction a (2E,4Z)-dienoyl-CoA + NADPH + H(+) = a 4,5-saturated-(3E)-enoyl-CoA + NADP(+). It carries out the reaction (2E,4E)-hexadienoyl-CoA + NADPH + H(+) = (3E)-hexenoyl-CoA + NADP(+). In terms of biological role, auxiliary enzyme of beta-oxidation. It participates in the metabolism of unsaturated fatty enoyl-CoA esters having double bonds in both even- and odd-numbered positions in mitochondria. Catalyzes the NADP-dependent reduction of 2,4-dienoyl-CoA to yield trans-3-enoyl-CoA. The chain is 2,4-dienoyl-CoA reductase [(3E)-enoyl-CoA-producing], mitochondrial (Decr1) from Mus musculus (Mouse).